The chain runs to 408 residues: Peptidase T (408 aa).

H78 contacts Zn(2+). D80 is a catalytic residue. Zn(2+) is bound at residue D140. The active-site Proton acceptor is the E173. Zn(2+)-binding residues include E174, D196, and H379.

Belongs to the peptidase M20B family. Zn(2+) is required as a cofactor.

Its subcellular location is the cytoplasm. It carries out the reaction Release of the N-terminal residue from a tripeptide.. Cleaves the N-terminal amino acid of tripeptides. The sequence is that of Peptidase T from Shigella flexneri serotype 5b (strain 8401).